The primary structure comprises 353 residues: Anthranilate phosphoribosyltransferase (353 aa).

5-phospho-alpha-D-ribose 1-diphosphate is bound by residues Gly87, Gly90–Asp91, Thr95, Asn97–Thr100, Lys115–Ser123, and Thr127. Gly87 is a binding site for anthranilate. Ser99 contributes to the Mg(2+) binding site. Asn118 contacts anthranilate. Position 173 (Arg173) interacts with anthranilate. Mg(2+) contacts are provided by Asp231 and Glu232.

It belongs to the anthranilate phosphoribosyltransferase family. In terms of assembly, homodimer. Mg(2+) is required as a cofactor.

The enzyme catalyses N-(5-phospho-beta-D-ribosyl)anthranilate + diphosphate = 5-phospho-alpha-D-ribose 1-diphosphate + anthranilate. The protein operates within amino-acid biosynthesis; L-tryptophan biosynthesis; L-tryptophan from chorismate: step 2/5. Functionally, catalyzes the transfer of the phosphoribosyl group of 5-phosphorylribose-1-pyrophosphate (PRPP) to anthranilate to yield N-(5'-phosphoribosyl)-anthranilate (PRA). The sequence is that of Anthranilate phosphoribosyltransferase from Salinispora arenicola (strain CNS-205).